The primary structure comprises 173 residues: uncharacterized protein (173 aa).

4 helical membrane passes run 9–29 (FSIC…LLCV), 32–52 (ICSA…TFFH), 100–120 (MFLC…SFIV), and 127–147 (FLFL…GLYP).

The protein resides in the membrane. This is an uncharacterized protein from Saccharomyces cerevisiae (strain ATCC 204508 / S288c) (Baker's yeast).